A 181-amino-acid chain; its full sequence is Large ribosomal subunit protein uL5 (181 aa).

It belongs to the universal ribosomal protein uL5 family. Part of the 50S ribosomal subunit; contacts the 5S rRNA and probably tRNA. Forms a bridge to the 30S subunit in the 70S ribosome.

This is one of the proteins that bind and probably mediate the attachment of the 5S RNA into the large ribosomal subunit, where it forms part of the central protuberance. In the 70S ribosome it contacts protein S13 of the 30S subunit (bridge B1b), connecting the 2 subunits; this bridge is implicated in subunit movement. May contact the P site tRNA; the 5S rRNA and some of its associated proteins might help stabilize positioning of ribosome-bound tRNAs. In Methanococcus maripaludis (strain C7 / ATCC BAA-1331), this protein is Large ribosomal subunit protein uL5.